Here is a 45-residue protein sequence, read N- to C-terminus: Putative UPF0377 protein YJL222W-B (45 aa).

The protein belongs to the UPF0377 family.

The protein is Putative UPF0377 protein YJL222W-B of Saccharomyces cerevisiae (strain ATCC 204508 / S288c) (Baker's yeast).